The chain runs to 105 residues: Large ribosomal subunit protein uL24 (105 aa).

Belongs to the universal ribosomal protein uL24 family. In terms of assembly, part of the 50S ribosomal subunit.

Functionally, one of two assembly initiator proteins, it binds directly to the 5'-end of the 23S rRNA, where it nucleates assembly of the 50S subunit. In terms of biological role, one of the proteins that surrounds the polypeptide exit tunnel on the outside of the subunit. The protein is Large ribosomal subunit protein uL24 of Nitrosospira multiformis (strain ATCC 25196 / NCIMB 11849 / C 71).